Consider the following 386-residue polypeptide: Enoyl-[acyl-carrier-protein] reductase 1, mitochondrial (386 aa).

The N-terminal 22 residues, Met1 to Thr22, are a transit peptide targeting the mitochondrion. Tyr79 acts as the Proton donor in catalysis. NADP(+)-binding positions include Asn172, Thr199–Val202, Arg222–Arg224, Tyr296–Met299, Phe321–Val323, and Lys381.

Belongs to the zinc-containing alcohol dehydrogenase family. Quinone oxidoreductase subfamily. Homodimer and heterodimer with ETR2.

The protein resides in the mitochondrion. The enzyme catalyses a 2,3-saturated acyl-[ACP] + NADP(+) = a (2E)-enoyl-[ACP] + NADPH + H(+). The catalysed reaction is (2E,4E)-hexadienoyl-CoA + NADPH + H(+) = (4E)-hexenoyl-CoA + NADP(+). It catalyses the reaction (2E)-hexenoyl-CoA + NADPH + H(+) = hexanoyl-CoA + NADP(+). In terms of biological role, catalyzes the NADPH-dependent reduction of trans-2-enoyl thioesters in mitochondrial fatty acid synthesis (fatty acid synthesis type II). Fatty acid chain elongation in mitochondria uses acyl carrier protein (ACP) as an acyl group carrier, but the enzyme accepts both ACP and CoA thioesters as substrates in vitro. Required for respiration and the maintenance of the mitochondrial compartment. The polypeptide is Enoyl-[acyl-carrier-protein] reductase 1, mitochondrial (ETR1) (Candida tropicalis (Yeast)).